The sequence spans 463 residues: NADH-ubiquinone oxidoreductase chain 4 (463 aa).

13 helical membrane passes run 24–44 (LWAG…IVLN), 62–82 (TISA…LIAS), 98–118 (IIMI…LELI), 119–139 (LFYI…TRWG), 151–171 (FMFY…AIYI), 198–218 (WALS…HLWL), 232–252 (ILAA…IALF), 260–280 (LSLA…VICV), 285–305 (LKAL…AAIF), 310–330 (WGMN…SALF), 353–373 (LLLP…LGLP), 404–424 (VFGA…TPFT), and 442–462 (LHIL…IAWL).

This sequence belongs to the complex I subunit 4 family.

It localises to the mitochondrion membrane. It carries out the reaction a ubiquinone + NADH + 5 H(+)(in) = a ubiquinol + NAD(+) + 4 H(+)(out). Functionally, core subunit of the mitochondrial membrane respiratory chain NADH dehydrogenase (Complex I) that is believed to belong to the minimal assembly required for catalysis. Complex I functions in the transfer of electrons from NADH to the respiratory chain. The immediate electron acceptor for the enzyme is believed to be ubiquinone. This chain is NADH-ubiquinone oxidoreductase chain 4 (ND4), found in Strongylocentrotus purpuratus (Purple sea urchin).